The sequence spans 58 residues: Alpha-conotoxin-like Pu1.6 (58 aa).

The first 17 residues, 1 to 17 (MFTVFLLVVLVTTVVFS), serve as a signal peptide directing secretion. Residues 18–35 (TSDHRPASNHENRRASKR) constitute a propeptide that is removed on maturation. Intrachain disulfides connect cysteine 44/cysteine 50 and cysteine 45/cysteine 58. Residues 46–48 (TNP) are lacks the Ser-Xaa-Pro motif that is crucial for potent interaction with nAChR.

The protein belongs to the conotoxin A superfamily. In terms of tissue distribution, expressed by the venom duct.

The protein localises to the secreted. Its function is as follows. Alpha-conotoxins act on postsynaptic membranes, they bind to the nicotinic acetylcholine receptors (nAChR) and thus inhibit them. Has possibly a distinct nAChR binding mode from other alpha-conotoxins, due to a different three residue motif (lacks the Ser-Xaa-Pro motif). This is Alpha-conotoxin-like Pu1.6 from Conus pulicarius (Flea-bitten cone).